Consider the following 95-residue polypeptide: uncharacterized protein (95 aa).

The helical transmembrane segment at 12–32 (IASLVVSVVVLLIGLILWFFI) threads the bilayer.

It is found in the cell membrane. This is an uncharacterized protein from Escherichia coli O6:H1 (strain CFT073 / ATCC 700928 / UPEC).